The primary structure comprises 754 residues: Deadenylation-dependent mRNA-decapping factor pdc2 (754 aa).

An interaction with lsm1 region spans residues 499 to 754 (LESIWKALYI…MGLDARQLSA (256 aa)).

Belongs to the PAT1 family. Interacts with dcp2. Interacts with lsm1; via C-terminus.

It localises to the cytoplasm. It is found in the nucleus. The protein resides in the P-body. Activator of decapping that functions as a general and active mechanism of translational repression and required for P-body formation. Stabilizes the 3' terminus of mRNAs and modulates the rates of mRNA-decapping that occur following deadenylation. Might be required for promoting the formation or the stabilization of the preinitiation translation complexes. Necessary for accurate chromosome transmission during cell division. Together with lsm1, recruits the deadenylase ccr4 to P-bodies. The chain is Deadenylation-dependent mRNA-decapping factor pdc2 from Schizosaccharomyces pombe (strain 972 / ATCC 24843) (Fission yeast).